We begin with the raw amino-acid sequence, 491 residues long: Cysteine protease ATG4 (491 aa).

The disordered stretch occupies residues 53-137; it reads KTKGEDSKLS…VDSSFDSSMA (85 aa). A compositionally biased stretch (polar residues) spans 61 to 72; it reads LSTATSSDQQRP. Residues 126–135 show a composition bias toward low complexity; sequence DSVDSSFDSS. Cysteine 206 (nucleophile) is an active-site residue. Active-site residues include aspartate 385 and histidine 387. The disordered stretch occupies residues 457-491; sequence VSEHDPSKGSASGRPSAIDEVETLSDDDGDTVLDG. A compositionally biased stretch (acidic residues) spans 475-491; sequence DEVETLSDDDGDTVLDG.

This sequence belongs to the peptidase C54 family. As to quaternary structure, interacts with ATG8.

The protein localises to the cytoplasm. It localises to the nucleus. It is found in the preautophagosomal structure. The catalysed reaction is [protein]-C-terminal L-amino acid-glycyl-phosphatidylethanolamide + H2O = [protein]-C-terminal L-amino acid-glycine + a 1,2-diacyl-sn-glycero-3-phosphoethanolamine. Functionally, cysteine protease that plays a key role in cytoplasm to vacuole transport (Cvt) and autophagy by mediating both proteolytic activation and delipidation of ATG8. Required for selective autophagic degradation of the nucleus (nucleophagy) as well as for mitophagy which contributes to regulate mitochondrial quantity and quality by eliminating the mitochondria to a basal level to fulfill cellular energy requirements and preventing excess ROS production. The protease activity is required for proteolytic activation of ATG8: cleaves the C-terminal amino acid of ATG8 to reveal a C-terminal glycine. ATG8 ubiquitin-like activity requires the exposure of the glycine at the C-terminus for its conjugation to phosphatidylethanolamine (PE) and its insertion to membranes, which is necessary for autophagy. The ATG8-PE conjugate mediates tethering between adjacent membranes and stimulates membrane hemifusion, leading to expansion of the autophagosomal membrane during autophagy. In addition to the protease activity, also catalyzes deconjugation of PE-conjugated forms of ATG8 during macroautophagy: ATG8 delipidation is required to release the protein from membranes, which facilitates multiple events during macroautophagy, and especially for efficient autophagosome biogenesis, the assembly of ATG9-containing tubulovesicular clusters into phagophores/autophagosomes, and for the disassembly of PAS-associated ATG components. ATG8 delipidation by ATG4 also recycles ATG8-PE generated on inappropriate membranes to maintain a reservoir of unlipidated ATG8 that is required for autophagosome formation at the PAS. The protein is Cysteine protease ATG4 (ATG4) of Pyricularia oryzae (strain 70-15 / ATCC MYA-4617 / FGSC 8958) (Rice blast fungus).